The chain runs to 582 residues: Aspartate--tRNA ligase (582 aa).

Residue Glu174 participates in L-aspartate binding. Residues 198–201 are aspartate; that stretch reads QITK. Arg220 is a binding site for L-aspartate. Residues 220–222 and Gln229 each bind ATP; that span reads RDE. His443 contributes to the L-aspartate binding site. ATP is bound at residue Glu477. An L-aspartate-binding site is contributed by Arg484. 529–532 is an ATP binding site; sequence GLDR.

Belongs to the class-II aminoacyl-tRNA synthetase family. Type 1 subfamily. In terms of assembly, homodimer.

It is found in the cytoplasm. The catalysed reaction is tRNA(Asp) + L-aspartate + ATP = L-aspartyl-tRNA(Asp) + AMP + diphosphate. Functionally, catalyzes the attachment of L-aspartate to tRNA(Asp) in a two-step reaction: L-aspartate is first activated by ATP to form Asp-AMP and then transferred to the acceptor end of tRNA(Asp). The polypeptide is Aspartate--tRNA ligase (Streptococcus pyogenes serotype M3 (strain ATCC BAA-595 / MGAS315)).